Here is a 276-residue protein sequence, read N- to C-terminus: NH(3)-dependent NAD(+) synthetase (276 aa).

Position 43-50 (43-50) interacts with ATP; sequence GISGGVDS. Mg(2+) is bound at residue aspartate 49. Deamido-NAD(+) is bound at residue arginine 146. Position 166 (threonine 166) interacts with ATP. A Mg(2+)-binding site is contributed by glutamate 171. 2 residues coordinate deamido-NAD(+): lysine 179 and aspartate 186. Residues lysine 195 and threonine 217 each coordinate ATP. 266 to 267 provides a ligand contact to deamido-NAD(+); it reads HK.

This sequence belongs to the NAD synthetase family. In terms of assembly, homodimer.

The catalysed reaction is deamido-NAD(+) + NH4(+) + ATP = AMP + diphosphate + NAD(+) + H(+). The protein operates within cofactor biosynthesis; NAD(+) biosynthesis; NAD(+) from deamido-NAD(+) (ammonia route): step 1/1. Its function is as follows. Catalyzes the ATP-dependent amidation of deamido-NAD to form NAD. Uses ammonia as a nitrogen source. In Shewanella frigidimarina (strain NCIMB 400), this protein is NH(3)-dependent NAD(+) synthetase.